Reading from the N-terminus, the 235-residue chain is Aspartate/glutamate leucyltransferase (235 aa).

Belongs to the R-transferase family. Bpt subfamily.

The protein resides in the cytoplasm. The enzyme catalyses N-terminal L-glutamyl-[protein] + L-leucyl-tRNA(Leu) = N-terminal L-leucyl-L-glutamyl-[protein] + tRNA(Leu) + H(+). The catalysed reaction is N-terminal L-aspartyl-[protein] + L-leucyl-tRNA(Leu) = N-terminal L-leucyl-L-aspartyl-[protein] + tRNA(Leu) + H(+). Its function is as follows. Functions in the N-end rule pathway of protein degradation where it conjugates Leu from its aminoacyl-tRNA to the N-termini of proteins containing an N-terminal aspartate or glutamate. This Pseudomonas fluorescens (strain SBW25) protein is Aspartate/glutamate leucyltransferase.